Consider the following 665-residue polypeptide: Coiled-coil domain-containing protein 138 (665 aa).

Thr-48 is modified (phosphothreonine). Ser-49 carries the phosphoserine modification. Positions 198-323 form a coiled coil; the sequence is QQKFAEELQK…YEFMTIQRLK (126 aa). Ser-469 is subject to Phosphoserine.

This chain is Coiled-coil domain-containing protein 138 (CCDC138), found in Macaca fascicularis (Crab-eating macaque).